The primary structure comprises 93 residues: Small ribosomal subunit protein uS19 (93 aa).

Belongs to the universal ribosomal protein uS19 family.

Functionally, protein S19 forms a complex with S13 that binds strongly to the 16S ribosomal RNA. In Thermus thermophilus (strain ATCC BAA-163 / DSM 7039 / HB27), this protein is Small ribosomal subunit protein uS19 (rpsS).